The following is a 613-amino-acid chain: Phostensin (613 aa).

A compositionally biased stretch (basic and acidic residues) spans 18–33 (EEASVRGREKAERERL). 2 disordered regions span residues 18 to 231 (EEAS…SAYQ) and 266 to 500 (GEER…AVPG). 5 positions are modified to phosphoserine: serine 54, serine 125, serine 133, serine 175, and serine 195. Basic and acidic residues-rich tracts occupy residues 104 to 154 (RSEE…ERRL) and 167 to 191 (LEAR…EAWK). The residue at position 199 (threonine 199) is a Phosphothreonine. Over residues 199–221 (TPERSLRLAESREQSPRRKEVES) the composition is skewed to basic and acidic residues. The residue at position 224 (serine 224) is a Phosphoserine. Over residues 266 to 282 (GEERQDYSEECGRKEEW) the composition is skewed to basic and acidic residues. Positions 295-309 (LSETLTREAQGNSSA) are enriched in polar residues. 3 stretches are compositionally biased toward basic and acidic residues: residues 314-327 (AEQR…RGMK), 340-350 (KAREWTPRDIE), and 357-366 (EPPESAEKLL). Serine 368 and serine 432 each carry phosphoserine. Residues 424–446 (QPPPPAPLSPPPPAPTAPQPPGD) are compositionally biased toward pro residues. Lysine 457 carries the post-translational modification N6-acetyllysine. Residues 476-499 (PRRSVPPATPATPTSPATVDAAVP) show a composition bias toward low complexity. Serine 490 and serine 530 each carry phosphoserine. The disordered stretch occupies residues 552–595 (QYPSESSVLEELGPEPEVPSAPNPPAAQPDDEEDEEELLLLQPE). A compositionally biased stretch (pro residues) spans 567 to 578 (PEVPSAPNPPAA). Residues 580-589 (PDDEEDEEEL) are compositionally biased toward acidic residues.

In terms of assembly, interacts with Protein phosphatase 1 (PP1). Isoform 4 is predominantly expressed in leukocytes and spleen.

It is found in the cytoplasm. It localises to the cytoskeleton. May target protein phosphatase 1 to F-actin cytoskeleton. This Homo sapiens (Human) protein is Phostensin (PPP1R18).